The sequence spans 327 residues: Peroxidase 15 (327 aa).

Residues 1–23 (MASFSPLLAMALAIFIFSSHSNA) form the signal peptide. Q24 bears the Pyrrolidone carboxylic acid mark. Disulfide bonds link C34-C115, C67-C72, C121-C323, and C200-C232. The N-linked (GlcNAc...) asparagine glycan is linked to N36. Catalysis depends on H65, which acts as the Proton acceptor. Residues D66, V69, G71, D73, and S75 each contribute to the Ca(2+) site. N81, N96, and N159 each carry an N-linked (GlcNAc...) asparagine glycan. P163 is a binding site for substrate. N-linked (GlcNAc...) asparagine glycosylation is found at N168 and N171. H193 contributes to the heme b binding site. T194 is a Ca(2+) binding site. Residues N209 and N221 are each glycosylated (N-linked (GlcNAc...) asparagine). Residues D245, T248, and D253 each contribute to the Ca(2+) site. N287 and N291 each carry an N-linked (GlcNAc...) asparagine glycan.

It belongs to the peroxidase family. Classical plant (class III) peroxidase subfamily. It depends on Ca(2+) as a cofactor. Heme b is required as a cofactor.

It localises to the secreted. It carries out the reaction 2 a phenolic donor + H2O2 = 2 a phenolic radical donor + 2 H2O. Its function is as follows. Removal of H(2)O(2), oxidation of toxic reductants, biosynthesis and degradation of lignin, suberization, auxin catabolism, response to environmental stresses such as wounding, pathogen attack and oxidative stress. These functions might be dependent on each isozyme/isoform in each plant tissue. This is Peroxidase 15 from Ipomoea batatas (Sweet potato).